The primary structure comprises 423 residues: 58 kDa phosphoprotein (423 aa).

Positions 46-60 are enriched in basic and acidic residues; it reads KMGYEKMKSEDSTEE. A disordered region spans residues 46–82; the sequence is KMGYEKMKSEDSTEEKSDEEEEDEEEEEEEEEDDDPE. Over residues 61–82 the composition is skewed to acidic residues; sequence KSDEEEEDEEEEEEEEEDDDPE. 3 TPR repeats span residues 113–146, 147–180, and 181–214; these read ICKL…GNPS, AMIY…NVDS, and ANAY…DYDE. Residues 260-301 form a disordered region; the sequence is KKKAEKMYKENNKRENYDSDSSDSSYSEPDFSGDFPGGMPGG. Positions 264–276 are enriched in basic and acidic residues; the sequence is EKMYKENNKRENY. The segment at 292-362 is 19 X 3-4 AA approximate repeats; sequence GDFPGGMPGG…GMPGMPGGMP (71 aa). Positions 361–423 constitute an STI1 domain; that stretch reads MPDLNSPEMK…GGMMGEKPKP (63 aa).

The protein resides in the cytoplasm. In terms of biological role, may play a role in protein folding or protein-protein interactions. May act as a co-chaperone. In Plasmodium berghei, this protein is 58 kDa phosphoprotein.